The primary structure comprises 532 residues: Apolipoprotein N-acyltransferase (532 aa).

A run of 6 helical transmembrane segments spans residues 37–57 (IFVA…GAIA), 75–95 (WWFG…ALLV), 106–126 (LAVL…AMIA), 128–148 (LLWS…ALAE), 179–199 (VIGL…PALL), and 207–227 (TGIG…AWTL). The region spanning 245 to 494 (VQPSIAQAMK…VGVVDSYLPS (250 aa)) is the CN hydrolase domain. E289 acts as the Proton acceptor in catalysis. The active site involves K353. Catalysis depends on C406, which acts as the Nucleophile. A helical transmembrane segment spans residues 505–525 (GWIQTVLILLTLLAASVGLIL).

This sequence belongs to the CN hydrolase family. Apolipoprotein N-acyltransferase subfamily.

The protein localises to the cell inner membrane. It carries out the reaction N-terminal S-1,2-diacyl-sn-glyceryl-L-cysteinyl-[lipoprotein] + a glycerophospholipid = N-acyl-S-1,2-diacyl-sn-glyceryl-L-cysteinyl-[lipoprotein] + a 2-acyl-sn-glycero-3-phospholipid + H(+). The protein operates within protein modification; lipoprotein biosynthesis (N-acyl transfer). Its function is as follows. Catalyzes the phospholipid dependent N-acylation of the N-terminal cysteine of apolipoprotein, the last step in lipoprotein maturation. The polypeptide is Apolipoprotein N-acyltransferase (Brucella suis biovar 1 (strain 1330)).